We begin with the raw amino-acid sequence, 109 residues long: Aquaporin-2 (109 aa).

At 1–6 (SVAFSR) the chain is on the cytoplasmic side. Residues 7–27 (AVFAEFLATLLFVFFGLGSAL) form a helical membrane-spanning segment. Topologically, residues 28 to 35 (NWPQALPS) are extracellular. A helical membrane pass occupies residues 36-54 (VLQIAMAFGLGIGTLVQAL). The Cytoplasmic portion of the chain corresponds to 55-59 (GHVSG). The discontinuously helical intramembrane region spans 60 to 69 (AHINPAVTVA). The short motif at 63–65 (NPA) is the NPA 1 element. Topologically, residues 70–80 (CLVGCHVSFLR) are cytoplasmic. Residues 81–102 (AAFYVAAQLLGAVAGAALLHEI) traverse the membrane as a helical segment. The Extracellular segment spans residues 103–109 (TPPHVRG).

Belongs to the MIP/aquaporin (TC 1.A.8) family. Homotetramer. Post-translationally, serine phosphorylation is necessary and sufficient for expression at the apical membrane. Endocytosis is not phosphorylation-dependent. N-glycosylated.

It is found in the apical cell membrane. The protein resides in the basolateral cell membrane. It localises to the cell membrane. The protein localises to the cytoplasmic vesicle membrane. Its subcellular location is the golgi apparatus. It is found in the trans-Golgi network membrane. The enzyme catalyses H2O(in) = H2O(out). It catalyses the reaction glycerol(in) = glycerol(out). Its function is as follows. Forms a water-specific channel that provides the plasma membranes of renal collecting duct with high permeability to water, thereby permitting water to move in the direction of an osmotic gradient. Plays an essential role in renal water homeostasis. Could also be permeable to glycerol. This is Aquaporin-2 from Canis lupus familiaris (Dog).